A 250-amino-acid chain; its full sequence is DNA polymerase sliding clamp (250 aa).

This sequence belongs to the PCNA family. Homotrimer. The subunits circularize to form a toroid; DNA passes through its center. Replication factor C (RFC) is required to load the toroid on the DNA.

Functionally, sliding clamp subunit that acts as a moving platform for DNA processing. Responsible for tethering the catalytic subunit of DNA polymerase and other proteins to DNA during high-speed replication. This Methanococcus maripaludis (strain C5 / ATCC BAA-1333) protein is DNA polymerase sliding clamp.